The sequence spans 124 residues: Fluoride-specific ion channel FluC (124 aa).

4 helical membrane-spanning segments follow: residues 4-24, 35-55, 60-80, and 102-122; these read LLLVALGGSIGAVFRYLISIF, FGTLLVNVLGSFLMGVIYALG, ISPELKALIGIGLLGALTTFS, and VVLNLSLCLFMVYLGQQLVFS. 2 residues coordinate Na(+): glycine 74 and threonine 77.

It belongs to the fluoride channel Fluc/FEX (TC 1.A.43) family.

Its subcellular location is the cell inner membrane. The enzyme catalyses fluoride(in) = fluoride(out). With respect to regulation, na(+) is not transported, but it plays an essential structural role and its presence is essential for fluoride channel function. Functionally, fluoride-specific ion channel. Important for reducing fluoride concentration in the cell, thus reducing its toxicity. The protein is Fluoride-specific ion channel FluC of Shewanella baltica (strain OS185).